Here is an 891-residue protein sequence, read N- to C-terminus: DNA mismatch repair protein MutS (891 aa).

An ATP-binding site is contributed by 646 to 653 (GPNMAGKS).

The protein belongs to the DNA mismatch repair MutS family.

In terms of biological role, this protein is involved in the repair of mismatches in DNA. It is possible that it carries out the mismatch recognition step. This protein has a weak ATPase activity. The sequence is that of DNA mismatch repair protein MutS from Rickettsia canadensis (strain McKiel).